A 222-amino-acid chain; its full sequence is Endonuclease V (222 aa).

Residues D43 and D109 each contribute to the Mg(2+) site.

This sequence belongs to the endonuclease V family. Mg(2+) is required as a cofactor.

It is found in the cytoplasm. It catalyses the reaction Endonucleolytic cleavage at apurinic or apyrimidinic sites to products with a 5'-phosphate.. Functionally, DNA repair enzyme involved in the repair of deaminated bases. Selectively cleaves double-stranded DNA at the second phosphodiester bond 3' to a deoxyinosine leaving behind the intact lesion on the nicked DNA. This chain is Endonuclease V, found in Roseiflexus castenholzii (strain DSM 13941 / HLO8).